The following is an 84-amino-acid chain: uncharacterized protein (84 aa).

This sequence belongs to the csb family.

This is an uncharacterized protein from Dictyostelium discoideum (Social amoeba).